Reading from the N-terminus, the 66-residue chain is DNA gyrase inhibitor YacG (66 aa).

Positions 9, 12, 28, and 32 each coordinate Zn(2+). The tract at residues 45 to 66 is disordered; sequence HKIAGSQESEDELYSGDLEPRH.

It belongs to the DNA gyrase inhibitor YacG family. As to quaternary structure, interacts with GyrB. It depends on Zn(2+) as a cofactor.

Inhibits all the catalytic activities of DNA gyrase by preventing its interaction with DNA. Acts by binding directly to the C-terminal domain of GyrB, which probably disrupts DNA binding by the gyrase. The polypeptide is DNA gyrase inhibitor YacG (Pseudomonas putida (strain W619)).